We begin with the raw amino-acid sequence, 551 residues long: Palmdelphin (551 aa).

Residue Met-1 is modified to N-acetylmethionine. Positions 12-106 (QAITDKRKIQ…LQISANEEVI (95 aa)) form a coiled coil. A Glycyl lysine isopeptide (Lys-Gly) (interchain with G-Cter in SUMO2) cross-link involves residue Lys-125. 2 positions are modified to phosphoserine: Ser-135 and Ser-163. Lys-178 participates in a covalent cross-link: Glycyl lysine isopeptide (Lys-Gly) (interchain with G-Cter in SUMO1); alternate. Lys-178 participates in a covalent cross-link: Glycyl lysine isopeptide (Lys-Gly) (interchain with G-Cter in SUMO2); alternate. Residues 247–258 (ERNSKSPTEYHE) show a composition bias toward basic and acidic residues. Positions 247-267 (ERNSKSPTEYHEPVYANPFCR) are disordered. Thr-270 carries the phosphothreonine modification. 2 disordered regions span residues 298–387 (HESE…CSSP) and 452–536 (EDDE…DPSL). Residues Ser-322, Ser-350, Ser-371, Ser-376, Ser-385, and Ser-386 each carry the phosphoserine modification. Residues 484 to 495 (KRSEVSPHENTN) are compositionally biased toward basic and acidic residues. Ser-498, Ser-515, and Ser-520 each carry phosphoserine.

It belongs to the paralemmin family. As to quaternary structure, interacts with GLUL. Post-translationally, phosphorylated. Expressed in the brain and the spinal cord. Expressed in the anterior olfactory nucleus, the olfactory tubercle, the nucleus supraopticus, the nucleus of the lateral olfactory tract, the piriform cortex, the cortico-amygdaloid transition zone, the septofimbrial nucleus and the indusium griseum (at protein level).

Its subcellular location is the cytoplasm. The protein localises to the cell projection. It is found in the dendrite. It localises to the dendritic spine. This chain is Palmdelphin (Palmd), found in Rattus norvegicus (Rat).